A 142-amino-acid chain; its full sequence is 3-hydroxyacyl-[acyl-carrier-protein] dehydratase FabZ (142 aa).

Residue H48 is part of the active site.

The protein belongs to the thioester dehydratase family. FabZ subfamily.

It localises to the cytoplasm. It catalyses the reaction a (3R)-hydroxyacyl-[ACP] = a (2E)-enoyl-[ACP] + H2O. Its function is as follows. Involved in unsaturated fatty acids biosynthesis. Catalyzes the dehydration of short chain beta-hydroxyacyl-ACPs and long chain saturated and unsaturated beta-hydroxyacyl-ACPs. This chain is 3-hydroxyacyl-[acyl-carrier-protein] dehydratase FabZ, found in Ruminiclostridium cellulolyticum (strain ATCC 35319 / DSM 5812 / JCM 6584 / H10) (Clostridium cellulolyticum).